Consider the following 556-residue polypeptide: F-box protein YDR131C (556 aa).

One can recognise an F-box domain in the interval methionine 1 to leucine 44.

In terms of assembly, interacts with SKP1. Component of the probable SCF(YDR131C) complex containing CDC53, SKP1, RBX1 and YDR131C.

The protein resides in the vacuole. The protein operates within protein modification; protein ubiquitination. In terms of biological role, substrate recognition component of a SCF (SKP1-CUL1-F-box protein) E3 ubiquitin-protein ligase complex which mediates the ubiquitination and subsequent proteasomal degradation of target proteins. Probably recognizes and binds to phosphorylated target proteins. In Saccharomyces cerevisiae (strain ATCC 204508 / S288c) (Baker's yeast), this protein is F-box protein YDR131C.